The primary structure comprises 391 residues: NADH-quinone oxidoreductase subunit D (391 aa).

Belongs to the complex I 49 kDa subunit family. NDH-1 is composed of 14 different subunits. Subunits NuoB, C, D, E, F, and G constitute the peripheral sector of the complex.

It localises to the cell inner membrane. It catalyses the reaction a quinone + NADH + 5 H(+)(in) = a quinol + NAD(+) + 4 H(+)(out). Its function is as follows. NDH-1 shuttles electrons from NADH, via FMN and iron-sulfur (Fe-S) centers, to quinones in the respiratory chain. The immediate electron acceptor for the enzyme in this species is believed to be ubiquinone. Couples the redox reaction to proton translocation (for every two electrons transferred, four hydrogen ions are translocated across the cytoplasmic membrane), and thus conserves the redox energy in a proton gradient. In Rickettsia conorii (strain ATCC VR-613 / Malish 7), this protein is NADH-quinone oxidoreductase subunit D.